The primary structure comprises 575 residues: Acyloxyacyl hydrolase (575 aa).

The N-terminal stretch at 1–25 is a signal peptide; it reads MKSPWRILVVSPLLLLPLHSSTSRA. The propeptide occupies 26–34; it reads HDNQPGTIR. A Saposin B-type domain is found at 36–117; that stretch reads DHYTCVGCVL…HTLEFCKQEP (82 aa). Residues 37–69 form an important for enzyme activity, localization to cytoplasmic vesicles, and protein stability region; the sequence is HYTCVGCVLVVSVIEQLAQVHNSTVQASMERLC. Cystine bridges form between C40–C113, C43–C107, C69–C82, C122–C453, C159–C168, C205–C229, C248–C328, and C375–C459. N58 is a glycosylation site (N-linked (GlcNAc...) asparagine). The interval 172–176 is lipopolysaccharide binding; the sequence is KLAIK. D183, D185, D187, Y189, D204, N206, D207, D209, V212, D222, D226, N228, N230, I232, and E244 together coordinate Ca(2+). N206 carries N-linked (GlcNAc...) asparagine glycosylation. The active site involves S262. N466 carries an N-linked (GlcNAc...) asparagine glycan.

In terms of assembly, heterodimer of the large and small subunits; disulfide-linked. The cofactor is Ca(2+). Post-translationally, cleaved into a large and a small subunit. In terms of processing, the small subunit is N-glycosylated.

Its subcellular location is the secreted. The protein localises to the cytoplasmic vesicle. It carries out the reaction a 3-(acyloxy)acyl derivative of bacterial toxin + H2O = a 3-hydroxyacyl derivative of bacterial toxin + a fatty acid + H(+). Functionally, removes the secondary (acyloxyacyl-linked) fatty acyl chains from the lipid A region of bacterial lipopolysaccharides (LPS). By breaking down LPS, terminates the host response to bacterial infection and prevents prolonged and damaging inflammatory responses. In peritoneal macrophages, seems to be important for recovery from a state of immune tolerance following infection by Gram-negative bacteria. The sequence is that of Acyloxyacyl hydrolase from Oryctolagus cuniculus (Rabbit).